A 276-amino-acid chain; its full sequence is Undecaprenyl-diphosphatase (276 aa).

8 helical membrane-spanning segments follow: residues 1 to 21 (MSWL…FLPV), 39 to 59 (AGAS…LVYF), 84 to 104 (YRLG…GLLL), 115 to 135 (LWAI…AEYF), 159 to 179 (LALL…LFLG), 190 to 210 (FLLA…DAFA), 222 to 242 (QLLV…AWFL), and 253 to 273 (FVGY…TGVV).

The protein belongs to the UppP family.

It is found in the cell membrane. The catalysed reaction is di-trans,octa-cis-undecaprenyl diphosphate + H2O = di-trans,octa-cis-undecaprenyl phosphate + phosphate + H(+). Functionally, catalyzes the dephosphorylation of undecaprenyl diphosphate (UPP). Confers resistance to bacitracin. This is Undecaprenyl-diphosphatase from Mycobacterium sp. (strain KMS).